Reading from the N-terminus, the 666-residue chain is MQAVNIIRWIDGPVLVGDSPGSKPPSERLQDTMAVSDPPVEAAGEASATRSGFWALTLGSIGVVFGDIGTSPLYAFREAVSHAAQQGTVTPVIVLGVLSLILWSLFIVVTAKYVLLLLRADNNGEGGTLSLMALGQRALGRQSLLLLALGVVGASMFIGDSMITPAISVLSAVEGLKLAAPEFGNYVVPLTLLILVMLFAVQSRGTASVASAFAPVMALWFVAIAVLGALHIHEDPSVLLAVNPWYAIHFLLNHGLIGLVIMGLVFLSVTGGEALYADLGHFGRKPIQAAWFCLVLPALLLNYFGQGALILAHPDAIENPFYRLAPAPMILPLVILATAATVIASQAVITGAYSLIRQAVQLGLLPRFEVRYTSETHAGQIYLPRVNILLLIGVLLLVLLFRTSSGLASAYGIAVSTTMVADGIMGFVVVWKLWNWRAATAAALVVPLVVVDIMFFSANLLKLLDGAWVPLLFGLIMVVLIWTWRRGAAILIKKTRRTEVPLLDLIKSLEKRPPHIVKGTAVFLTSDPNFVPTALLHNLKHNKVLHEHNVILTIETAQTPRVDPSERVRMENISEKFSTVSLRFGFMESPNVPKALVIARKLGWQFDIMATSFFVSRRSLKASAQSGMPVWQDRLFIAMSRSANDAINYFQIPTGRVVEVGTQVII.

The next 12 helical transmembrane spans lie at 53-73, 89-109, 144-164, 181-201, 212-232, 247-267, 291-311, 324-344, 381-401, 411-431, 441-461, and 463-483; these read FWAL…TSPL, VTPV…FIVV, LLLL…SMIT, PEFG…LFAV, AFAP…ALHI, AIHF…LVFL, WFCL…ALIL, LAPA…TVIA, IYLP…VLLF, YGIA…VVVW, AAAL…ANLL, and LLDG…LIWT.

The protein belongs to the HAK/KUP transporter (TC 2.A.72) family.

The protein localises to the cell inner membrane. The enzyme catalyses K(+)(in) + H(+)(in) = K(+)(out) + H(+)(out). Functionally, transport of potassium into the cell. Likely operates as a K(+):H(+) symporter. This Nitrobacter hamburgensis (strain DSM 10229 / NCIMB 13809 / X14) protein is Probable potassium transport system protein Kup.